Consider the following 147-residue polypeptide: MTNTLKISLKPNEKIYINGAVIRVDRKVTIELMNDVQFLLESHVIQADQASTPLRQLYFIVQVMLINPAGADDAREMFRRSLPLLIASFEDAEICSALKQIDRMVGEDHIYEALKAIRSLYPLERRALGGNDDVPGAPRPLAVGARY.

It belongs to the FlbT family.

In terms of biological role, has a post-transcriptional repressor function in flagellum biogenesis. Associates with the 5'-UTR of fljK mRNA and promotes its degradation. The polypeptide is Probable flagellum biosynthesis repressor protein FlbT (Mesorhizobium japonicum (strain LMG 29417 / CECT 9101 / MAFF 303099) (Mesorhizobium loti (strain MAFF 303099))).